The primary structure comprises 491 residues: Trypanothione reductase (491 aa).

35-52 (DVQATHGPPALVALGGTC) lines the FAD pocket. Cysteines 52 and 57 form a disulfide. His-461 serves as the catalytic Proton acceptor.

It belongs to the class-I pyridine nucleotide-disulfide oxidoreductase family. As to quaternary structure, homodimer. FAD is required as a cofactor.

It is found in the cytoplasm. It catalyses the reaction trypanothione + NADP(+) = trypanothione disulfide + NADPH + H(+). In terms of biological role, trypanothione is the parasite analog of glutathione; this enzyme is the equivalent of glutathione reductase. In Leishmania donovani, this protein is Trypanothione reductase (TPR).